The sequence spans 174 residues: Small ribosomal subunit protein uS5 (174 aa).

The S5 DRBM domain maps to 19–82 (LREKMIAINR…EEARRNMTKI (64 aa)).

The protein belongs to the universal ribosomal protein uS5 family. In terms of assembly, part of the 30S ribosomal subunit. Contacts proteins S4 and S8.

With S4 and S12 plays an important role in translational accuracy. Functionally, located at the back of the 30S subunit body where it stabilizes the conformation of the head with respect to the body. This is Small ribosomal subunit protein uS5 from Albidiferax ferrireducens (strain ATCC BAA-621 / DSM 15236 / T118) (Rhodoferax ferrireducens).